The primary structure comprises 1023 residues: MFHLRTCAAKLRPLTASQTVKTFSQNKPAAIRTFQQIRCYSAPVAAEPFLSGTSSNYVEEMYCAWLENPKSVHKSWDIFFRNTNAGAPPGTAYQSPLSLSRSSLATMAHAQSLVEAQPNVDKLVEDHLAVQSLIRAYQIRGHHVAQLDPLGILDADLDSSVPADIISSTDKLGFYGLHESDLDKVFHLPTTTFIGGQEPALPLREIIRRLEMAYCQHIGVEFMFINDLEQCQWIRQKFETPGIMQFTNEEKRTLLARLVRSTRFEEFLQRKWSSEKRFGLEGCEVLIPALKTIIDMSSANGVDYVIMGMPHRGRLNVLANVIRKELEQIFCQFDSKLEAADEGSGDMKYHLGMYHRRINRVTDRNITLSLVANPSHLEAADPVVMGKTKAEQFYCGDTEGKKVMSILLHGDAAFAGQGIVYETFHLSDLPSYTTHGTVHVVVNNQIGFTTDPRMARSSPYPTDVARVVNAPIFHVNSDDPEAVMYVCKVAAEWRNTFHKDVVVDLVCYRRNGHNEMDEPMFTQPLMYKQIRKQKPVLQKYAELLVSQGVVNQPEYEEEISKYDKICEEAFTRSKDEKILHIKHWLDSPWPGFFTLDGQPRSMTCPSTGLEEDVLFHIGKVASSVPVENFTIHGGLSRILKTRRELVTNRTVDWALAEYMAFGSLLKEGIHVRLSGQDVERGTFSHRHHVLHDQNVDKRTCIPMNHLWPNQAPYTVCNSSLSEYGVLGFELGFAMASPNALVLWEAQFGDFNNMAQCIIDQFICPGQAKWVRQNGIVLLLPHGMEGMGPEHSSARPERFLQMCNDDPDVLPDLQEENFDINQLYDCNWIVVNCSTPGNFFHVLRRQILLPFRKPLIVFTPKSLLRHPEARTSFDEMLPGTHFQRVIPENGPAAQDPHKVKRLLFCTGKVYYDLTRERKARNMEEEVAITRIEQLSPFPFDLLLKEAQKYPNAELAWCQEEHKNQGYYDYVKPRLRTTIDRAKPVWYAGRDPAAAPATGNKKTHLTELQRFLDTAFDLDAFKKFS.

A mitochondrion-targeting transit peptide spans 1–40 (MFHLRTCAAKLRPLTASQTVKTFSQNKPAAIRTFQQIRCY). The residue at position 74 (Lys74) is an N6-succinyllysine. At Ser100 the chain carries Phosphoserine. His143, Asp156, and Asp158 together coordinate Ca(2+). Arg312 lines the thiamine diphosphate pocket. Lys401 bears the N6-acetyllysine mark. Thiamine diphosphate-binding residues include Asp411, Asn444, and Ile446. The Mg(2+) site is built by Asp411, Asn444, and Ile446. Lys534 is covalently cross-linked (Glycyl lysine isopeptide (Lys-Gly) (interchain with G-Cter in ubiquitin)). An N6-succinyllysine modification is found at Lys564. A thiamine diphosphate-binding site is contributed by Gln676. Positions 933 to 939 (LSPFPFD) are recognized by alloreactive CD8 cytotoxic T-lymphocytes in association with a class I MHC protein. At Lys970 the chain carries N6-acetyllysine.

The protein belongs to the alpha-ketoglutarate dehydrogenase family. Homodimer. The 2-oxoglutarate dehydrogenase complex is composed of OGDH (2-oxoglutarate dehydrogenase; E1), DLST (dihydrolipoamide succinyltransferase; E2), DLD (dihydrolipoamide dehydrogenase; E3) and the assembly factor KGD4. It contains multiple copies of the three enzymatic components (E1, E2 and E3). In the nucleus, the 2-oxoglutarate dehydrogenase complex associates with KAT2A. Interacts with ABHD11; this interaction maintains the functional lipoylation of the 2-oxoglutarate dehydrogenase complex. Thiamine diphosphate serves as cofactor. The cofactor is Mg(2+).

The protein localises to the mitochondrion. The protein resides in the nucleus. It carries out the reaction N(6)-[(R)-lipoyl]-L-lysyl-[protein] + 2-oxoglutarate + H(+) = N(6)-[(R)-S(8)-succinyldihydrolipoyl]-L-lysyl-[protein] + CO2. Calcium ions and ADP stimulate, whereas ATP and NADH reduce catalytic activity. Its function is as follows. 2-oxoglutarate dehydrogenase (E1o) component of the 2-oxoglutarate dehydrogenase complex (OGDHC). Participates in the first step, rate limiting for the overall conversion of 2-oxoglutarate to succinyl-CoA and CO(2) catalyzed by the whole OGDHC. Catalyzes the irreversible decarboxylation of 2-oxoglutarate (alpha-ketoglutarate) via the thiamine diphosphate (ThDP) cofactor and subsequent transfer of the decarboxylated acyl intermediate on an oxidized dihydrolipoyl group that is covalently amidated to the E2 enzyme (dihydrolipoyllysine-residue succinyltransferase or DLST). Plays a key role in the Krebs (citric acid) cycle, which is a common pathway for oxidation of fuel molecules, including carbohydrates, fatty acids, and amino acids. Can catalyze the decarboxylation of 2-oxoadipate in vitro, but at a much lower rate than 2-oxoglutarate. Mainly active in the mitochondrion. A fraction of the 2-oxoglutarate dehydrogenase complex also localizes in the nucleus and is required for lysine succinylation of histones: associates with KAT2A on chromatin and provides succinyl-CoA to histone succinyltransferase KAT2A. This Mus musculus (Mouse) protein is 2-oxoglutarate dehydrogenase complex component E1.